The sequence spans 197 residues: Nucleoside triphosphate pyrophosphatase (197 aa).

Residue Asp-71 is the Proton acceptor of the active site.

It belongs to the Maf family. A divalent metal cation serves as cofactor.

It is found in the cytoplasm. The catalysed reaction is a ribonucleoside 5'-triphosphate + H2O = a ribonucleoside 5'-phosphate + diphosphate + H(+). It carries out the reaction a 2'-deoxyribonucleoside 5'-triphosphate + H2O = a 2'-deoxyribonucleoside 5'-phosphate + diphosphate + H(+). In terms of biological role, nucleoside triphosphate pyrophosphatase. May have a dual role in cell division arrest and in preventing the incorporation of modified nucleotides into cellular nucleic acids. The chain is Nucleoside triphosphate pyrophosphatase from Synechococcus sp. (strain JA-2-3B'a(2-13)) (Cyanobacteria bacterium Yellowstone B-Prime).